A 125-amino-acid polypeptide reads, in one-letter code: Large ribosomal subunit protein bL12 (125 aa).

It belongs to the bacterial ribosomal protein bL12 family. As to quaternary structure, homodimer. Part of the ribosomal stalk of the 50S ribosomal subunit. Forms a multimeric L10(L12)X complex, where L10 forms an elongated spine to which 2 to 4 L12 dimers bind in a sequential fashion. Binds GTP-bound translation factors.

Its function is as follows. Forms part of the ribosomal stalk which helps the ribosome interact with GTP-bound translation factors. Is thus essential for accurate translation. This Sinorhizobium medicae (strain WSM419) (Ensifer medicae) protein is Large ribosomal subunit protein bL12.